A 463-amino-acid polypeptide reads, in one-letter code: MKSFDEMTPKEIVQELDKYIVGQYEAKKAVAIAVRNRIRRQKLPEEWRKEVLPKNILMIGPTGVGKTEIARRLAQLSGSPFLKVEATRFTEVGYVGKNVDSMIRDLVEISVNMVKQEKIKEVERQAEELVEERILDALVPESKAVPVVTNPFINLITGGQQQQYTPEDRRRFRAKREEMREKLRKGELENEEIEIELEETVSPFMGIFGPGMEDLGIEITNMFSGMLPKQKKKRKMKVSEARKVLLPLEAEKLIDMDKVVQEALDRAQNRGIIFIDEIDKIAGKESAVGPDVSRQGVQRDLLPIVEGTTIMTKYGPVRTDYILFIAAGAFHVSRPSDLIPELQGRFPIRVELSPLTEEDFVRILKEPENAIIKQYQALLSTEGVELVFTEDGIREMARIAYQLNQRLENIGARRLYTVAEKVLEEISFEAPDIPEKRIVVDAEYVRRRLERIVQDEDLSAYIL.

Residues valine 21, 63–68 (GVGKTE), aspartate 276, glutamate 341, and arginine 413 contribute to the ATP site.

It belongs to the ClpX chaperone family. HslU subfamily. In terms of assembly, a double ring-shaped homohexamer of HslV is capped on each side by a ring-shaped HslU homohexamer. The assembly of the HslU/HslV complex is dependent on binding of ATP.

It localises to the cytoplasm. In terms of biological role, ATPase subunit of a proteasome-like degradation complex; this subunit has chaperone activity. The binding of ATP and its subsequent hydrolysis by HslU are essential for unfolding of protein substrates subsequently hydrolyzed by HslV. HslU recognizes the N-terminal part of its protein substrates and unfolds these before they are guided to HslV for hydrolysis. The protein is ATP-dependent protease ATPase subunit HslU of Thermotoga sp. (strain RQ2).